Here is a 238-residue protein sequence, read N- to C-terminus: EKC/KEOPS complex subunit SPAP27G11.07c (238 aa).

In terms of domain architecture, Protein kinase spans 20–238 (EKKLTVVKQG…MRGRKRTMIG (219 aa)). ATP-binding positions include 26-34 (VKQGAEAIT) and Lys-48. Catalysis depends on Asp-148, which acts as the Proton acceptor.

This sequence belongs to the protein kinase superfamily. BUD32 family. Component of the EKC/KEOPS complex composed of at least SPAP27G11.07c/BUD32, cgi121, gon7, pgp2 and SPAC4H3.13/PCC1; the whole complex dimerizes.

The protein resides in the cytoplasm. It is found in the nucleus. Its subcellular location is the chromosome. The protein localises to the telomere. It catalyses the reaction L-seryl-[protein] + ATP = O-phospho-L-seryl-[protein] + ADP + H(+). It carries out the reaction L-threonyl-[protein] + ATP = O-phospho-L-threonyl-[protein] + ADP + H(+). Component of the EKC/KEOPS complex that is required for the formation of a threonylcarbamoyl group on adenosine at position 37 (t(6)A37) in tRNAs that read codons beginning with adenine. The complex is probably involved in the transfer of the threonylcarbamoyl moiety of threonylcarbamoyl-AMP (TC-AMP) to the N6 group of A37. BUD32 has ATPase activity in the context of the EKC/KEOPS complex and likely plays a supporting role to the catalytic subunit KAE1. The EKC/KEOPS complex also promotes both telomere uncapping and telomere elongation. The complex is required for efficient recruitment of transcriptional coactivators. The sequence is that of EKC/KEOPS complex subunit SPAP27G11.07c from Schizosaccharomyces pombe (strain 972 / ATCC 24843) (Fission yeast).